The chain runs to 228 residues: Movement and silencing protein TGBp1 (228 aa).

The (+)RNA virus helicase ATP-binding domain maps to Met-1–Leu-132. The region spanning Ser-133–Ser-228 is the (+)RNA virus helicase C-terminal domain.

This sequence belongs to the Tymovirales TGBp1 protein family. In terms of assembly, homodimer and homooligomer. Interacts with capsid protein. Interacts with host AGO1; this interaction targets the host protein for degradation, thereby suppressing the antiviral RNA silencing.

It localises to the host cytoplasm. Transports viral genome to neighboring plant cells directly through plasmosdesmata, without any budding. The movement protein allows efficient cell to cell propagation, by bypassing the host cell wall barrier. Increases plasmodesma size exclusion limit. Acts as a suppressor of RNA-mediated gene silencing, also known as post-transcriptional gene silencing (PTGS), a mechanism of plant viral defense that limits the accumulation of viral RNAs. This chain is Movement and silencing protein TGBp1, found in Lilium (LSV).